We begin with the raw amino-acid sequence, 346 residues long: 4-hydroxy-2-oxovalerate aldolase (346 aa).

Positions 8-260 constitute a Pyruvate carboxyltransferase domain; it reads VTVHDMTLRD…ETGVDVFKIQ (253 aa). 16-17 provides a ligand contact to substrate; it reads RD. Asp17 is a Mn(2+) binding site. Catalysis depends on His20, which acts as the Proton acceptor. Substrate is bound by residues Ser170 and His199. Positions 199 and 201 each coordinate Mn(2+). Tyr290 lines the substrate pocket.

Belongs to the 4-hydroxy-2-oxovalerate aldolase family.

The enzyme catalyses (S)-4-hydroxy-2-oxopentanoate = acetaldehyde + pyruvate. The sequence is that of 4-hydroxy-2-oxovalerate aldolase from Polaromonas naphthalenivorans (strain CJ2).